Here is a 208-residue protein sequence, read N- to C-terminus: Protein-L-isoaspartate O-methyltransferase (208 aa).

Ser-59 is an active-site residue.

Belongs to the methyltransferase superfamily. L-isoaspartyl/D-aspartyl protein methyltransferase family.

Its subcellular location is the cytoplasm. The catalysed reaction is [protein]-L-isoaspartate + S-adenosyl-L-methionine = [protein]-L-isoaspartate alpha-methyl ester + S-adenosyl-L-homocysteine. Functionally, catalyzes the methyl esterification of L-isoaspartyl residues in peptides and proteins that result from spontaneous decomposition of normal L-aspartyl and L-asparaginyl residues. It plays a role in the repair and/or degradation of damaged proteins. In Klebsiella pneumoniae subsp. pneumoniae (strain ATCC 700721 / MGH 78578), this protein is Protein-L-isoaspartate O-methyltransferase.